A 235-amino-acid polypeptide reads, in one-letter code: Glucosamine-6-phosphate deaminase (235 aa).

The Proton acceptor; for enolization step role is filled by Asp-62. The active-site For ring-opening step is the Asn-128. The active-site Proton acceptor; for ring-opening step is the His-130. The For ring-opening step role is filled by Glu-135.

This sequence belongs to the glucosamine/galactosamine-6-phosphate isomerase family. NagB subfamily.

The catalysed reaction is alpha-D-glucosamine 6-phosphate + H2O = beta-D-fructose 6-phosphate + NH4(+). Its pathway is amino-sugar metabolism; N-acetylneuraminate degradation; D-fructose 6-phosphate from N-acetylneuraminate: step 5/5. Its function is as follows. Catalyzes the reversible isomerization-deamination of glucosamine 6-phosphate (GlcN6P) to form fructose 6-phosphate (Fru6P) and ammonium ion. This is Glucosamine-6-phosphate deaminase from Streptococcus pneumoniae (strain JJA).